A 197-amino-acid polypeptide reads, in one-letter code: Viral polyamine acetyltransferase (197 aa).

Asn-22 contributes to the acetyl-CoA binding site. Glu-27 is an active-site residue. One can recognise an N-acetyltransferase domain in the interval Ser-102–Asp-182. Acetyl-CoA is bound by residues Ile-115, Ser-117, Gly-121, Gly-123, Ala-125, Thr-126, Thr-149, Asn-150, and Lys-159.

Belongs to the acetyltransferase family.

The catalysed reaction is spermine + acetyl-CoA = N(1)-acetylspermine + CoA + H(+). The enzyme catalyses spermidine + acetyl-CoA = N(1)-acetylspermidine + CoA + H(+). It catalyses the reaction spermidine + acetyl-CoA = N(8)-acetylspermidine + CoA + H(+). It carries out the reaction putrescine + acetyl-CoA = N-acetylputrescine + CoA + H(+). The catalysed reaction is cadaverine + acetyl-CoA = N-acetylcadaverine + CoA + H(+). The enzyme catalyses sym-homospermidine + acetyl-CoA = N(1)-acetyl-sym-homospermidine + CoA + H(+). In terms of biological role, acetylates polyamines such as spermine, spermidine, cadaverine, homospermidine and putrescine (the latter with low efficiency). May play a role in the regulation of polyamine catabolism in the host during viral replication. This chain is Viral polyamine acetyltransferase, found in Chlorella (PBCV-1).